The following is a 1315-amino-acid chain: DNA-directed RNA polymerase subunit beta' (1315 aa).

Positions 60, 62, 75, and 78 each coordinate Zn(2+). Residues Asp535, Asp537, and Asp539 each coordinate Mg(2+). Zn(2+) is bound by residues Cys890, Cys967, Cys974, and Cys977.

Belongs to the RNA polymerase beta' chain family. As to quaternary structure, the RNAP catalytic core consists of 2 alpha, 1 beta, 1 beta' and 1 omega subunit. When a sigma factor is associated with the core the holoenzyme is formed, which can initiate transcription. Requires Mg(2+) as cofactor. Zn(2+) serves as cofactor.

It catalyses the reaction RNA(n) + a ribonucleoside 5'-triphosphate = RNA(n+1) + diphosphate. In terms of biological role, DNA-dependent RNA polymerase catalyzes the transcription of DNA into RNA using the four ribonucleoside triphosphates as substrates. In Mycobacterium sp. (strain MCS), this protein is DNA-directed RNA polymerase subunit beta'.